The following is a 649-amino-acid chain: V-type ATP synthase subunit I (649 aa).

Transmembrane regions (helical) follow at residues 312 to 332 (FFSF…GLVF), 360 to 380 (FMIL…FFGV), 453 to 473 (FIDN…LSLG), 485 to 505 (IGWV…LQAV), 520 to 540 (GLVG…GGVI), 556 to 576 (VFSD…GAMV), and 593 to 613 (ILII…GGVI).

The protein belongs to the V-ATPase 116 kDa subunit family.

It is found in the cell membrane. Produces ATP from ADP in the presence of a proton gradient across the membrane. This Chlamydia trachomatis serovar D (strain ATCC VR-885 / DSM 19411 / UW-3/Cx) protein is V-type ATP synthase subunit I (atpI).